Here is a 302-residue protein sequence, read N- to C-terminus: uncharacterized protein (302 aa).

9 helical membrane-spanning segments follow: residues 3–23 (ILGV…SDWF), 39–59 (FVIG…LTSA), 77–97 (SCIC…PIIV), 106–126 (LVYL…FSWI), 128–148 (GVVL…NGSA), 163–183 (FSLV…ELFV), 199–219 (VIGF…VSLA), 227–247 (GMVL…ALAV), and 254–274 (LPAE…LYLF).

The protein belongs to the Ca(2+):cation antiporter (CaCA) (TC 2.A.19) family.

It is found in the cell membrane. This is an uncharacterized protein from Methanocaldococcus jannaschii (strain ATCC 43067 / DSM 2661 / JAL-1 / JCM 10045 / NBRC 100440) (Methanococcus jannaschii).